We begin with the raw amino-acid sequence, 349 residues long: N-formyl peptide receptor 3 (349 aa).

Residues 1–27 (METNFSIPLNETEEVLPEPAGHTVLWI) are Extracellular-facing. N-linked (GlcNAc...) asparagine glycans are attached at residues Asn4 and Asn10. The helical transmembrane segment at 28–50 (FSLLVHGVTFIFGVLGNGLVIWV) threads the bilayer. Residues 51 to 61 (AGFRMTRTVNT) are Cytoplasmic-facing. The chain crosses the membrane as a helical span at residues 62 to 83 (ICYLNLALADFSFSAILPFHMV). Residues 84–100 (SVAMREKWPFGTFLCKL) lie on the Extracellular side of the membrane. An intrachain disulfide couples Cys98 to Cys176. A helical membrane pass occupies residues 101–121 (VHVMIDINLFVSVYLITIIAL). At 122–140 (DRCICVLHPAWAQNHRTMS) the chain is on the cytoplasmic side. Residues 141–162 (LAKRVMTGLWILTIVLTLPNFI) traverse the membrane as a helical segment. Over 163–205 (FWTTISTTNGDTYCIFNYPFWGDTVVERMNVFITMAKVSLILH) the chain is Extracellular. A helical membrane pass occupies residues 206 to 226 (FIIGFSIPMSIITVCYGIIVA). Residues 227-242 (KIHKKRMTKSSRPLHI) are Cytoplasmic-facing. A helical membrane pass occupies residues 243–266 (FTAVVASFFICWFPYELTGILMAV). The Extracellular segment spans residues 267–286 (WLKEILLNGKYKIILVLINP). Residues 287-306 (TSSLAFFNSCLNPSLYVFMG) traverse the membrane as a helical segment. Residues 307–349 (HNFQERLIRSLPTSLERALTEVPDSAQTSNTHTTSASPPEETE) are Cytoplasmic-facing. Positions 327–349 (EVPDSAQTSNTHTTSASPPEETE) are disordered. Over residues 331–343 (SAQTSNTHTTSAS) the composition is skewed to polar residues.

The protein belongs to the G-protein coupled receptor 1 family.

Its subcellular location is the cell membrane. Low affinity receptor for N-formyl-methionyl peptides, which are powerful neutrophils chemotactic factors. Binding of FMLP to the receptor causes activation of neutrophils. This response is mediated via a G-protein that activates a phosphatidylinositol-calcium second messenger system. The sequence is that of N-formyl peptide receptor 3 (FPR3) from Macaca mulatta (Rhesus macaque).